Consider the following 471-residue polypeptide: UDP-N-acetylmuramoylalanine--D-glutamate ligase (471 aa).

ATP is bound at residue 123–129 (GTNGKST).

It belongs to the MurCDEF family.

It is found in the cytoplasm. It carries out the reaction UDP-N-acetyl-alpha-D-muramoyl-L-alanine + D-glutamate + ATP = UDP-N-acetyl-alpha-D-muramoyl-L-alanyl-D-glutamate + ADP + phosphate + H(+). It functions in the pathway cell wall biogenesis; peptidoglycan biosynthesis. Cell wall formation. Catalyzes the addition of glutamate to the nucleotide precursor UDP-N-acetylmuramoyl-L-alanine (UMA). The polypeptide is UDP-N-acetylmuramoylalanine--D-glutamate ligase (Caulobacter vibrioides (strain ATCC 19089 / CIP 103742 / CB 15) (Caulobacter crescentus)).